The following is a 160-amino-acid chain: Thebaine synthase 2 (160 aa).

Thebaine is bound at residue Ser74. The active-site Proton acceptor is the His89. A thebaine-binding site is contributed by Thr105.

The protein belongs to the MLP family. As to quaternary structure, homodimer (allosteric) and oligomers. In terms of tissue distribution, expressed in poppy latex.

The catalysed reaction is (7S)-O-acetylsalutaridinol = thebaine + acetate + H(+). Its pathway is alkaloid biosynthesis; morphine biosynthesis. Slightly inhibited by salutaridine and (7S)-salutaridinol. Functionally, catalyzes the formation of thebaine from (7S)-salutaridinol 7-O-acetate at the expense of labile hydroxylated by-products, which are preferentially produced by spontaneous allylic elimination. No visible activity toward (7S)-salutaridinol (at pH 7). The sequence is that of Thebaine synthase 2 from Papaver somniferum (Opium poppy).